The sequence spans 341 residues: tRNA N6-adenosine threonylcarbamoyltransferase (341 aa).

Fe cation is bound by residues histidine 111 and histidine 115. Residues 134 to 138 (LVSGG), aspartate 167, glycine 180, and asparagine 276 contribute to the substrate site. Fe cation is bound at residue aspartate 304.

It belongs to the KAE1 / TsaD family. It depends on Fe(2+) as a cofactor.

The protein resides in the cytoplasm. It catalyses the reaction L-threonylcarbamoyladenylate + adenosine(37) in tRNA = N(6)-L-threonylcarbamoyladenosine(37) in tRNA + AMP + H(+). In terms of biological role, required for the formation of a threonylcarbamoyl group on adenosine at position 37 (t(6)A37) in tRNAs that read codons beginning with adenine. Is involved in the transfer of the threonylcarbamoyl moiety of threonylcarbamoyl-AMP (TC-AMP) to the N6 group of A37, together with TsaE and TsaB. TsaD likely plays a direct catalytic role in this reaction. This is tRNA N6-adenosine threonylcarbamoyltransferase from Pseudomonas putida (strain ATCC 700007 / DSM 6899 / JCM 31910 / BCRC 17059 / LMG 24140 / F1).